The primary structure comprises 200 residues: A-type ATP synthase subunit E (200 aa).

It belongs to the V-ATPase E subunit family. As to quaternary structure, has multiple subunits with at least A(3), B(3), C, D, E, F, H, I and proteolipid K(x).

Its subcellular location is the cell membrane. Component of the A-type ATP synthase that produces ATP from ADP in the presence of a proton gradient across the membrane. The sequence is that of A-type ATP synthase subunit E from Aeropyrum pernix (strain ATCC 700893 / DSM 11879 / JCM 9820 / NBRC 100138 / K1).